Consider the following 94-residue polypeptide: MNDRKRAVQARVYGRVQGVGYRIWTRSEAAGLGLVGWVRNERDGSVTAWLAGADAAVSAMIERLRQGPAGASVSRVEVEEIETWTAPGDFRIVA.

The 88-residue stretch at 7–94 (AVQARVYGRV…TAPGDFRIVA (88 aa)) folds into the Acylphosphatase-like domain. Active-site residues include Arg22 and Asn40.

Belongs to the acylphosphatase family.

The catalysed reaction is an acyl phosphate + H2O = a carboxylate + phosphate + H(+). In Mesorhizobium japonicum (strain LMG 29417 / CECT 9101 / MAFF 303099) (Mesorhizobium loti (strain MAFF 303099)), this protein is Acylphosphatase (acyP).